Here is a 217-residue protein sequence, read N- to C-terminus: Ribosomal RNA small subunit methyltransferase G (217 aa).

S-adenosyl-L-methionine contacts are provided by residues G76, F81, 128 to 129 (LE), and R142.

This sequence belongs to the methyltransferase superfamily. RNA methyltransferase RsmG family.

It is found in the cytoplasm. The catalysed reaction is guanosine(527) in 16S rRNA + S-adenosyl-L-methionine = N(7)-methylguanosine(527) in 16S rRNA + S-adenosyl-L-homocysteine. Functionally, specifically methylates the N7 position of guanine in position 527 of 16S rRNA. The sequence is that of Ribosomal RNA small subunit methyltransferase G from Rhizorhabdus wittichii (strain DSM 6014 / CCUG 31198 / JCM 15750 / NBRC 105917 / EY 4224 / RW1) (Sphingomonas wittichii).